Consider the following 256-residue polypeptide: Triosephosphate isomerase (256 aa).

10–12 (NWK) lines the substrate pocket. The Electrophile role is filled by histidine 96. The Proton acceptor role is filled by glutamate 168. Positions 174 and 213 each coordinate substrate.

The protein belongs to the triosephosphate isomerase family. Homodimer.

The protein resides in the cytoplasm. The enzyme catalyses D-glyceraldehyde 3-phosphate = dihydroxyacetone phosphate. The protein operates within carbohydrate biosynthesis; gluconeogenesis. Its pathway is carbohydrate degradation; glycolysis; D-glyceraldehyde 3-phosphate from glycerone phosphate: step 1/1. Involved in the gluconeogenesis. Catalyzes stereospecifically the conversion of dihydroxyacetone phosphate (DHAP) to D-glyceraldehyde-3-phosphate (G3P). The chain is Triosephosphate isomerase from Wigglesworthia glossinidia brevipalpis.